The chain runs to 486 residues: Membrane-bound lytic murein transglycosylase F (486 aa).

Residues 1-28 form the signal peptide; sequence MFAHTLFRKRCAIWLLAIGIFLMLGSCA. The interval 29 to 267 is non-LT domain; it reads EKPSELERIK…RLRERYYGHV (239 aa). The tract at residues 268–486 is LT domain; it reads DVLGYVGAYA…TDLMEELPPL (219 aa). Residue Glu314 is part of the active site.

It in the N-terminal section; belongs to the bacterial solute-binding protein 3 family. The protein in the C-terminal section; belongs to the transglycosylase Slt family.

It is found in the cell outer membrane. It carries out the reaction Exolytic cleavage of the (1-&gt;4)-beta-glycosidic linkage between N-acetylmuramic acid (MurNAc) and N-acetylglucosamine (GlcNAc) residues in peptidoglycan, from either the reducing or the non-reducing ends of the peptidoglycan chains, with concomitant formation of a 1,6-anhydrobond in the MurNAc residue.. Murein-degrading enzyme that degrades murein glycan strands and insoluble, high-molecular weight murein sacculi, with the concomitant formation of a 1,6-anhydromuramoyl product. Lytic transglycosylases (LTs) play an integral role in the metabolism of the peptidoglycan (PG) sacculus. Their lytic action creates space within the PG sacculus to allow for its expansion as well as for the insertion of various structures such as secretion systems and flagella. This is Membrane-bound lytic murein transglycosylase F from Stutzerimonas stutzeri (strain A1501) (Pseudomonas stutzeri).